A 307-amino-acid polypeptide reads, in one-letter code: Protoheme IX farnesyltransferase (307 aa).

Transmembrane regions (helical) follow at residues 38–58 (NTLT…LSVL), 65–85 (FFTI…NNYI), 108–128 (PGFA…FLLL), 131–151 (PMAV…YSLW), 158–178 (LNTV…WAAI), 186–206 (IAWM…LALA), 251–271 (LGIT…VLGF), and 287–307 (FVYS…VTFF).

The protein belongs to the UbiA prenyltransferase family. Protoheme IX farnesyltransferase subfamily. In terms of assembly, interacts with CtaA.

It is found in the cell membrane. The catalysed reaction is heme b + (2E,6E)-farnesyl diphosphate + H2O = Fe(II)-heme o + diphosphate. The protein operates within porphyrin-containing compound metabolism; heme O biosynthesis; heme O from protoheme: step 1/1. Converts heme B (protoheme IX) to heme O by substitution of the vinyl group on carbon 2 of heme B porphyrin ring with a hydroxyethyl farnesyl side group. This chain is Protoheme IX farnesyltransferase, found in Bacillus thuringiensis (strain Al Hakam).